The chain runs to 452 residues: Ribosomal protein uS12 methylthiotransferase RimO (452 aa).

One can recognise an MTTase N-terminal domain in the interval 3–118 (GKIGFVSLGC…VMQVIHLHLP (116 aa)). The [4Fe-4S] cluster site is built by C12, C48, C77, C149, C153, and C156. A Radical SAM core domain is found at 135-382 (LTPKHYAYLK…AKAEEISVGR (248 aa)). The 69-residue stretch at 384-452 (AKKIGKRLQV…SQGHDLIAET (69 aa)) folds into the TRAM domain.

It belongs to the methylthiotransferase family. RimO subfamily. [4Fe-4S] cluster serves as cofactor.

It localises to the cytoplasm. The catalysed reaction is L-aspartate(89)-[ribosomal protein uS12]-hydrogen + (sulfur carrier)-SH + AH2 + 2 S-adenosyl-L-methionine = 3-methylsulfanyl-L-aspartate(89)-[ribosomal protein uS12]-hydrogen + (sulfur carrier)-H + 5'-deoxyadenosine + L-methionine + A + S-adenosyl-L-homocysteine + 2 H(+). Catalyzes the methylthiolation of an aspartic acid residue of ribosomal protein uS12. This is Ribosomal protein uS12 methylthiotransferase RimO from Polynucleobacter necessarius subsp. necessarius (strain STIR1).